A 444-amino-acid polypeptide reads, in one-letter code: Trigger factor (444 aa).

One can recognise a PPIase FKBP-type domain in the interval 160 to 245; it reads DMQVTFDFEG…VKQVEKPKLP (86 aa).

This sequence belongs to the FKBP-type PPIase family. Tig subfamily.

It localises to the cytoplasm. It catalyses the reaction [protein]-peptidylproline (omega=180) = [protein]-peptidylproline (omega=0). Functionally, involved in protein export. Acts as a chaperone by maintaining the newly synthesized protein in an open conformation. Functions as a peptidyl-prolyl cis-trans isomerase. The protein is Trigger factor of Acinetobacter baumannii (strain AB0057).